Here is a 200-residue protein sequence, read N- to C-terminus: Potassium-transporting ATPase KdpC subunit (200 aa).

Residues 9–31 (LVMLVALTALTGLVYPLAMTGVA) traverse the membrane as a helical segment. The interval 68 to 97 (GRPSATTAPDPQDSSKTVPSPYNAANSMGA) is disordered. Positions 71 to 96 (SATTAPDPQDSSKTVPSPYNAANSMG) are enriched in polar residues.

The protein belongs to the KdpC family. In terms of assembly, the system is composed of three essential subunits: KdpA, KdpB and KdpC.

The protein resides in the cell inner membrane. Part of the high-affinity ATP-driven potassium transport (or Kdp) system, which catalyzes the hydrolysis of ATP coupled with the electrogenic transport of potassium into the cytoplasm. This subunit acts as a catalytic chaperone that increases the ATP-binding affinity of the ATP-hydrolyzing subunit KdpB by the formation of a transient KdpB/KdpC/ATP ternary complex. In Rhodopseudomonas palustris (strain BisA53), this protein is Potassium-transporting ATPase KdpC subunit.